A 117-amino-acid polypeptide reads, in one-letter code: Succinate dehydrogenase hydrophobic membrane anchor subunit (117 aa).

Residues 1–15 lie on the Cytoplasmic side of the membrane; the sequence is MVEMESAKSVLEPLA. A helical membrane pass occupies residues 16–36; it reads WLMQMITGLLMILLVTAHFYV. Residues 37–61 lie on the Extracellular side of the membrane; it reads THMTTHDALRYAEVVERVAQPEFKA. A helical membrane pass occupies residues 62–82; the sequence is LYALLLLAVSFHAFNGLRAIL. His-73 provides a ligand contact to heme. The Cytoplasmic segment spans residues 83–92; sequence LDTNAGMRKK. Residues 93-115 form a helical membrane-spanning segment; that stretch reads GAVSALTTLAFLLAFFYGLYLLF.

As to quaternary structure, part of an enzyme complex containing four subunits: a flavoprotein, an iron-sulfur protein, plus two membrane-anchoring proteins, SdhC and SdhD. Heme is required as a cofactor.

The protein localises to the cell membrane. It participates in carbohydrate metabolism; tricarboxylic acid cycle. Functionally, membrane-anchoring subunit of succinate dehydrogenase (SDH). This chain is Succinate dehydrogenase hydrophobic membrane anchor subunit (sdhD), found in Archaeoglobus fulgidus (strain ATCC 49558 / DSM 4304 / JCM 9628 / NBRC 100126 / VC-16).